The chain runs to 226 residues: MYTLIIPAAGQGKRMGAGKNKLFLLINEVPIIVHTLRAFEKDKACKNIIMAINEEERPYFEELMQKYPVKKPVQFIQGGAERQDSVYNAIQHTSDVEYVLVHDGARPFVTNKVIQDVLTAAEKYGASICAVPVKDTVKKVEQGVVVETVERSQLKAVQTPQGFSVSLLLEAHRSAKQSCFLGTDDASLVERIGKQVGVVEGSYYNIKVTTPEDLLIAESFLHVQKK.

The protein belongs to the IspD/TarI cytidylyltransferase family. IspD subfamily.

It carries out the reaction 2-C-methyl-D-erythritol 4-phosphate + CTP + H(+) = 4-CDP-2-C-methyl-D-erythritol + diphosphate. The protein operates within isoprenoid biosynthesis; isopentenyl diphosphate biosynthesis via DXP pathway; isopentenyl diphosphate from 1-deoxy-D-xylulose 5-phosphate: step 2/6. Catalyzes the formation of 4-diphosphocytidyl-2-C-methyl-D-erythritol from CTP and 2-C-methyl-D-erythritol 4-phosphate (MEP). This is 2-C-methyl-D-erythritol 4-phosphate cytidylyltransferase from Bacillus cereus (strain ATCC 10987 / NRS 248).